Here is a 344-residue protein sequence, read N- to C-terminus: MLDVDNLDLENLLKKYYEKTNEKIVFVNKDGKVIAMNDAAEEIISKDNNYSAMTNAICNRCEGYSNEFALQSCINCYLDTTKPNDMNFQVFMKTVDNKIQPFTASYQCIDDEAQIYAFTLQDISPQIERQEKMYQRQMLRKTIAAQENERKRISRELHDSVVQEMLNVDVELRLLKYQQDMAQLIEKSEHIELLMSNLINDIRDLSVELRPSSLDDLGLEAAFKSYFKQLEYNYGLNVVYQSNIQTIRFDSEIETVVYRVVQEAIFNALKYAGVYEVEVTIQQTEEGLIAEIIDRGKGFDPNLKPQGTGLGLYGMNERAELVKGTVNIETHIGKGTIITLEVPV.

The [4Fe-4S] cluster site is built by Cys58, Cys61, Cys73, and Cys76. A Histidine kinase domain is found at 147-344 (ENERKRISRE…GTIITLEVPV (198 aa)). The residue at position 158 (His158) is a Phosphohistidine; by autocatalysis.

Requires [4Fe-4S] cluster as cofactor. In terms of processing, autophosphorylated.

Its subcellular location is the cytoplasm. The catalysed reaction is ATP + protein L-histidine = ADP + protein N-phospho-L-histidine.. Its function is as follows. Member of the two-component regulatory system NreB/NreC involved in the control of dissimilatory nitrate/nitrite reduction in response to oxygen. NreB functions as a direct oxygen sensor histidine kinase which is autophosphorylated, in the absence of oxygen, probably at the conserved histidine residue, and transfers its phosphate group probably to a conserved aspartate residue of NreC. NreB/NreC activates the expression of the nitrate (narGHJI) and nitrite (nir) reductase operons, as well as the putative nitrate transporter gene narT. In Staphylococcus haemolyticus (strain JCSC1435), this protein is Oxygen sensor histidine kinase NreB (nreB).